Consider the following 117-residue polypeptide: Cell division protein FtsL (117 aa).

Residues 1–35 are Cytoplasmic-facing; it reads MSNLAYQPEKQQRHAISPEKKVIVKKRASITLGEK. The helical transmembrane segment at 36-56 threads the bilayer; that stretch reads VLLVLFAAAVLSVSLLIVSKA. At 57 to 117 the chain is on the extracellular side; sequence YAAYQTNIEV…KDKKVKNIQE (61 aa).

It belongs to the FtsL family. In terms of assembly, monomer. Interacts with DivIB and DivIC. Interaction with DivIC stabilizes FtsL against RasP cleavage. In terms of processing, cleaved by RasP. Cleavage is important for turnover and function of FtsL.

The protein localises to the cell membrane. In terms of biological role, essential cell division protein that may play a structural role. Probably involved in the regulation of the timing of cell division. Also required for sporulation. This chain is Cell division protein FtsL, found in Bacillus subtilis (strain 168).